A 425-amino-acid polypeptide reads, in one-letter code: Sensor histidine kinase NarS (425 aa).

The next 6 helical transmembrane spans lie at 42–62, 71–91, 107–127, 130–150, 155–175, and 181–201; these read IASVLRIGVVGLMVAAMVVGT, IVLIGVYAVAALWALLLAYSA, LEPFAFTAVDVLILTGFQLLS, GIYPLLIMILLPVLVGLDVST, VVLACTLVGFAVAVLGDPVML, and PETIFRFALYAFLCATALMVV. Residues 224–425 form the Histidine kinase domain; the sequence is QTMTASEVLQ…HVCVELPLKR (202 aa). His241 is subject to Phosphohistidine; by autocatalysis.

Post-translationally, autophosphorylated on His-241.

The protein localises to the cell membrane. The catalysed reaction is ATP + protein L-histidine = ADP + protein N-phospho-L-histidine.. Its function is as follows. Member of the two-component regulatory system NarS/NarL involved in gene expression during aerobic nitrate metabolism. Plays therefore a crucial role in anaerobic survival of mycobacteria in host. Functions as a sensor protein kinase which is autophosphorylated at a histidine residue and transfers its phosphate group to the conserved aspartic acid residue in the regulatory domain of NarL. In turn, NarL binds to the upstream promoter regions of target genes to regulate their expression during aerobic nitrate metabolism. This chain is Sensor histidine kinase NarS, found in Mycobacterium tuberculosis (strain ATCC 25618 / H37Rv).